Here is a 429-residue protein sequence, read N- to C-terminus: Histidine--tRNA ligase (429 aa).

The protein belongs to the class-II aminoacyl-tRNA synthetase family. Homodimer.

The protein localises to the cytoplasm. It catalyses the reaction tRNA(His) + L-histidine + ATP = L-histidyl-tRNA(His) + AMP + diphosphate + H(+). The protein is Histidine--tRNA ligase of Corynebacterium efficiens (strain DSM 44549 / YS-314 / AJ 12310 / JCM 11189 / NBRC 100395).